The chain runs to 258 residues: Imidazole glycerol phosphate synthase subunit HisF (258 aa).

Active-site residues include D11 and D130.

Belongs to the HisA/HisF family. As to quaternary structure, heterodimer of HisH and HisF.

The protein localises to the cytoplasm. It catalyses the reaction 5-[(5-phospho-1-deoxy-D-ribulos-1-ylimino)methylamino]-1-(5-phospho-beta-D-ribosyl)imidazole-4-carboxamide + L-glutamine = D-erythro-1-(imidazol-4-yl)glycerol 3-phosphate + 5-amino-1-(5-phospho-beta-D-ribosyl)imidazole-4-carboxamide + L-glutamate + H(+). It functions in the pathway amino-acid biosynthesis; L-histidine biosynthesis; L-histidine from 5-phospho-alpha-D-ribose 1-diphosphate: step 5/9. Functionally, IGPS catalyzes the conversion of PRFAR and glutamine to IGP, AICAR and glutamate. The HisF subunit catalyzes the cyclization activity that produces IGP and AICAR from PRFAR using the ammonia provided by the HisH subunit. The protein is Imidazole glycerol phosphate synthase subunit HisF of Methylorubrum populi (strain ATCC BAA-705 / NCIMB 13946 / BJ001) (Methylobacterium populi).